The primary structure comprises 378 residues: Cytochrome b (378 aa).

4 consecutive transmembrane segments (helical) span residues 35–55 (FGSL…FLAM), 79–101 (WIIR…CHIG), 114–134 (TWIM…LGYV), and 180–200 (FFSL…LHIF). Positions 85 and 99 each coordinate heme b. Heme b is bound by residues His184 and His198. A ubiquinone is bound at residue His203. 4 helical membrane-spanning segments follow: residues 226 to 246 (YSAK…FISF), 290 to 310 (LGGV…PLTH), 326 to 346 (FFWL…QPVC), and 350 to 370 (VMCS…CGPL).

Belongs to the cytochrome b family. In terms of assembly, the main subunits of complex b-c1 are: cytochrome b, cytochrome c1 and the Rieske protein. Heme b is required as a cofactor.

Its subcellular location is the mitochondrion inner membrane. In terms of biological role, component of the ubiquinol-cytochrome c reductase complex (complex III or cytochrome b-c1 complex) that is part of the mitochondrial respiratory chain. The b-c1 complex mediates electron transfer from ubiquinol to cytochrome c. Contributes to the generation of a proton gradient across the mitochondrial membrane that is then used for ATP synthesis. This chain is Cytochrome b (mt:Cyt-b), found in Paraspadella gotoi (Arrow worm).